The chain runs to 413 residues: CinA-like protein (413 aa).

Belongs to the CinA family.

The chain is CinA-like protein from Geobacter sulfurreducens (strain ATCC 51573 / DSM 12127 / PCA).